A 167-amino-acid polypeptide reads, in one-letter code: Translationally-controlled tumor protein homolog (167 aa).

One can recognise a TCTP domain in the interval 1 to 167 (MIIYKDIFSG…WKHGIDEEKI (167 aa)).

The protein belongs to the TCTP family.

It localises to the cytoplasm. Its subcellular location is the cytoskeleton. Involved in protein synthesis. Involved in microtubule stabilization. The protein is Translationally-controlled tumor protein homolog of Candida glabrata (strain ATCC 2001 / BCRC 20586 / JCM 3761 / NBRC 0622 / NRRL Y-65 / CBS 138) (Yeast).